The chain runs to 503 residues: Interferon regulatory factor 7 (503 aa).

Residues 11–126 (RVLFGEWLLG…DPHKVYALSR (116 aa)) constitute a DNA-binding region (IRF tryptophan pentad repeat). Positions 69 to 88 (RWPPSSRGGGPPPEAETAER) are disordered. N6-acetyllysine; by KAT2A and KAT2B is present on Lys92. 2 disordered regions span residues 133–156 (GPGTDQTEAEAPAAVPPPQGGPPG) and 242–277 (TTPSPGPQPAALTTGEAAAPESPHQAEPYLSPSPSA). Positions 146–156 (AVPPPQGGPPG) are enriched in pro residues. A necessary for the interaction with NMI region spans residues 284–456 (PSPGALDVTI…SLVLVKLEPW (173 aa)). A Glycyl lysine isopeptide (Lys-Gly) (interchain with G-Cter in ubiquitin) cross-link involves residue Lys375. Glycyl lysine isopeptide (Lys-Gly) (interchain with G-Cter in SUMO) cross-links involve residues Lys444 and Lys446. Phosphoserine is present on residues Ser471, Ser472, and Ser475. Phosphoserine; by TBK1 and IKKE is present on residues Ser477 and Ser479. A phosphoserine mark is found at Ser483, Ser484, and Ser487.

Belongs to the IRF family. Monomer. Homodimer; phosphorylation-induced. Heterodimer with IRF3. Interacts with TICAM1 and TICAM2. Interacts with MYD88 and TRAF6. Interacts with TRIM35. Interacts with NMI; the interaction is direct and leads to the inhibition of IRF7-mediated type I IFN production. Interacts with GBP4; preventing interaction between TRAF6 and IRF7, resulting in impaired TRAF6-mediated IRF7 ubiquitination. In terms of assembly, (Microbial infection) Interacts with Epstein-Barr virus LF2 and LMP1. As to quaternary structure, (Microbial infection) Interacts with rotavirus A NSP1; this interaction leads to the proteasome-dependent degradation of IRF7. (Microbial infection) Interacts with human herpes virus 8/HHV-8 proteins ORF45 and vIRF-1. In terms of assembly, (Microbial infection) Interacts with human T-cell leukemia virus 1/HTLV-1 protein HBZ. As to quaternary structure, (Microbial infection) Interacts with Seneca Valley virus protease 3C; this interaction is involved in the suppression of IRF7 expression and phosphorylation by the virus. (Microbial infection) Interacts with ebolavirus VP35; this interaction mediates the sumoylation of IRF7 and contributes to the viral inhibition of IFN-type I production. In terms of assembly, (Microbial infection) Interacts with severe fever with thrombocytopenia syndrome virus (SFTSV) NSs; this interaction sequesters IRF7 in NSs-induced cytoplasmic inclusion bodies. As to quaternary structure, (Microbial infection) Interacts with herpes virus 8/HHV-8 protein vIRF-4; this interaction prevents IRF7 dimerization and subsequent activation. (Microbial infection) Interacts with human metapneumovirus protein M2-2; this interaction prevents IRF7 phosphorlyation and subsequent TLR7/9-dependent IFN-alpha induction. Acetylation inhibits its DNA-binding ability and activity. Post-translationally, in response to a viral infection, phosphorylated on Ser-477 and Ser-479 by TBK1 and IKBKE1. Phosphorylation, and subsequent activation is inhibited by vaccinia virus protein E3. In TLR7- and TLR9-mediated signaling pathway, phosphorylated by IRAK1. In terms of processing, TRAF6-mediated ubiquitination is required for IRF7 activation. TRIM35 mediates IRF7 'Lys-48'-linked polyubiquitination and subsequent proteasomal degradation. Ubiquitinated by UBE3C, leading to its degradation. Sumoylated by TRIM28, which inhibits its transactivation activity. Post-translationally, (Microbial infection) Cleaved and inactivated by the protease 3C of enterovirus 71 allowing the virus to disrupt the host type I interferon production. In terms of processing, (Microbial infection) Cleaved and inactivated by the protease 3C of human enterovirus 68D (EV68) allowing the virus to disrupt the host type I interferon production. 'Lys-48'-linked polyubiquitination and subsequent proteasomal degradation is NMI-dependent in response to Sendai virus infection. Post-translationally, 'Lys-63'-linked ubiquitination by NEURL3 promotes IRF7 activation. As to expression, expressed predominantly in spleen, thymus and peripheral blood leukocytes.

It is found in the nucleus. The protein localises to the cytoplasm. In the absence of viral infection, maintained as a monomer in an autoinhibited state and phosphorylation disrupts this autoinhibition leading to the liberation of the DNA-binding and dimerization activities and its nuclear localization where it can activate type I IFN and ISG genes. Key transcriptional regulator of type I interferon (IFN)-dependent immune responses and plays a critical role in the innate immune response against DNA and RNA viruses. Regulates the transcription of type I IFN genes (IFN-alpha and IFN-beta) and IFN-stimulated genes (ISG) by binding to an interferon-stimulated response element (ISRE) in their promoters. Can efficiently activate both the IFN-beta (IFNB) and the IFN-alpha (IFNA) genes and mediate their induction via both the virus-activated, MyD88-independent pathway and the TLR-activated, MyD88-dependent pathway. Induces transcription of ubiquitin hydrolase USP25 mRNA in response to lipopolysaccharide (LPS) or viral infection in a type I IFN-dependent manner. Required during both the early and late phases of the IFN gene induction but is more critical for the late than for the early phase. Exists in an inactive form in the cytoplasm of uninfected cells and following viral infection, double-stranded RNA (dsRNA), or toll-like receptor (TLR) signaling, becomes phosphorylated by IKBKE and TBK1 kinases. This induces a conformational change, leading to its dimerization and nuclear localization where along with other coactivators it can activate transcription of the type I IFN and ISG genes. Can also play a role in regulating adaptive immune responses by inducing PSMB9/LMP2 expression, either directly or through induction of IRF1. Binds to the Q promoter (Qp) of EBV nuclear antigen 1 a (EBNA1) and may play a role in the regulation of EBV latency. Can activate distinct gene expression programs in macrophages and regulate the anti-tumor properties of primary macrophages. This chain is Interferon regulatory factor 7 (IRF7), found in Homo sapiens (Human).